We begin with the raw amino-acid sequence, 180 residues long: Non-specific lipid transfer protein GPI-anchored 3 (180 aa).

Residues Met-1–Ala-22 form the signal peptide. Cystine bridges form between Cys-41–Cys-78, Cys-48–Cys-62, Cys-63–Cys-104, and Cys-76–Cys-113. N-linked (GlcNAc...) asparagine glycosylation is found at Asn-91 and Asn-120. Composition is skewed to low complexity over residues Ser-116 to Pro-125 and Pro-133 to Pro-156. Positions Ser-116 to Pro-156 are disordered. The GPI-anchor amidated serine moiety is linked to residue Ser-158. Positions Ser-159–Phe-180 are cleaved as a propeptide — removed in mature form.

The protein belongs to the plant LTP family. In terms of tissue distribution, restricted to stamen, pollen and sporophytic tissues. Also detected, at low levels, in stems and leaves.

The protein localises to the cell membrane. Its function is as follows. Lipid transfer protein involved in seed and ovule maturation and development, probably by regulating the fatty acids homeostasis during suberin and sporopollenin biosynthesis or deposition. This chain is Non-specific lipid transfer protein GPI-anchored 3, found in Arabidopsis thaliana (Mouse-ear cress).